Consider the following 310-residue polypeptide: Cytosolic Fe-S cluster assembly factor NUBP1 homolog (310 aa).

[4Fe-4S] cluster-binding residues include C12, C26, C29, and C35. 66–73 (GKGGVGKS) is a binding site for ATP. [4Fe-4S] cluster contacts are provided by C240 and C243.

This sequence belongs to the Mrp/NBP35 ATP-binding proteins family. NUBP1/NBP35 subfamily. As to quaternary structure, heterotetramer of 2 NUBP1 and 2 NUBP2 chains. [4Fe-4S] cluster is required as a cofactor.

It is found in the cytoplasm. Component of the cytosolic iron-sulfur (Fe/S) protein assembly (CIA) machinery. Required for maturation of extramitochondrial Fe-S proteins. The NUBP1-NUBP2 heterotetramer forms a Fe-S scaffold complex, mediating the de novo assembly of an Fe-S cluster and its transfer to target apoproteins. This is Cytosolic Fe-S cluster assembly factor NUBP1 homolog from Brugia malayi (Filarial nematode worm).